The sequence spans 311 residues: Pyrimidine-specific ribonucleoside hydrolase RihA (311 aa).

Residue His240 is part of the active site.

It belongs to the IUNH family. RihA subfamily.

Hydrolyzes cytidine or uridine to ribose and cytosine or uracil, respectively. This is Pyrimidine-specific ribonucleoside hydrolase RihA from Salmonella enteritidis PT4 (strain P125109).